A 549-amino-acid polypeptide reads, in one-letter code: MTPEELSAAISACLKDAVSTGEIALTESAVPDAVRVERPKNRDHGDWATNIALQLSKQAGMNPREFAGILSNHLQGIPGVTGVEIAGPGFLNITVDAATAGALAKAIVEAGASYGTNQALAGRVVNMEFVSANPTGPLHIGHTRWAALGDAIARVLRASGADVTAEYYINDAGSQMNVFANSVLSRLHGRGVPEGGYPGEYIRELGDEVLKAHPGIRELTDEAALPVIRAAAYEAQMSDIKTTLAEFGVEFDVFFSEKELHDAGAIESAVARLREQGHVFDDGGAVWLRTTDFGDDKDRVMIRANGEPTYFAADAAYYLSKKDRGFTEKIYLLGADHHGYINRLKAIAACAGDDPEVNIEVLIGQLVSVNGAKLSKRAGNIIELKDLISWLGKDAVRYSLARFPADSPLTLDPELLKKHSNENPVFYVQYAHARSRGTARNAAEAGVDRSVFDASLLDHATENELLSYLGSYPSIVAKAAELREPHRVARHLEVIAGAYHRWYDACRVSPQGEEPVLDVNRTRLWLNDATSQVLANGLELLGVSAPERM.

The short motif at 132–142 is the 'HIGH' region element; that stretch reads ANPTGPLHIGH.

Belongs to the class-I aminoacyl-tRNA synthetase family. As to quaternary structure, monomer.

It localises to the cytoplasm. The enzyme catalyses tRNA(Arg) + L-arginine + ATP = L-arginyl-tRNA(Arg) + AMP + diphosphate. This is Arginine--tRNA ligase from Paenarthrobacter aurescens (strain TC1).